The chain runs to 115 residues: MSSKPTQAFSLKTRQAVDEDALLTEEDRVVKEATKGEDCTTRRRACKNCTCGRAELERKMLAEGKKVEMPQMPAGGCGNCAKGDAFRCATCPFLGQPAFDNTSDGKVKLNLTDDI.

Residues 30 to 115 form a disordered region; sequence VKEATKGEDC…KVKLNLTDDI (86 aa). Residues C39, C46, C49, and C51 each contribute to the [2Fe-2S] cluster site. The interval 39-51 is fe-S binding site A; the sequence is CTTRRRACKNCTC. [4Fe-4S] cluster-binding residues include C77, C80, C88, and C91. Short sequence motifs (cx2C motif) lie at residues 77–80 and 88–91; these read CGNC and CATC. Positions 77–91 are fe-S binding site B; sequence CGNCAKGDAFRCATC.

It belongs to the anamorsin family. Monomer. [2Fe-2S] cluster is required as a cofactor. It depends on [4Fe-4S] cluster as a cofactor.

Its subcellular location is the cytoplasm. The protein localises to the mitochondrion intermembrane space. Component of the cytosolic iron-sulfur (Fe-S) protein assembly (CIA) machinery. Required for the maturation of extramitochondrial Fe-S proteins. Part of an electron transfer chain functioning in an early step of cytosolic Fe-S biogenesis, facilitating the de novo assembly of a [4Fe-4S] cluster on the cytosolic Fe-S scaffold complex. Electrons are transferred from NADPH via a FAD- and FMN-containing diflavin oxidoreductase. Together with the diflavin oxidoreductase, also required for the assembly of the diferric tyrosyl radical cofactor of ribonucleotide reductase (RNR), probably by providing electrons for reduction during radical cofactor maturation in the catalytic small subunit. This is Anamorsin homolog 2 from Trypanosoma cruzi (strain CL Brener).